We begin with the raw amino-acid sequence, 356 residues long: Tyrosine recombinase XerS (356 aa).

The region spanning 16-121 (LMPWYVLEYY…ALSSLYKYLT (106 aa)) is the Core-binding (CB) domain. The Tyr recombinase domain occupies 169-354 (GFLTYIDQEH…VNDEQKNALD (186 aa)). Residues arginine 210, lysine 234, histidine 306, arginine 309, and histidine 332 contribute to the active site. Residue tyrosine 341 is the O-(3'-phospho-DNA)-tyrosine intermediate of the active site.

It belongs to the 'phage' integrase family. XerS subfamily.

It is found in the cytoplasm. Its activity is regulated as follows. FtsK is required for recombination. Its function is as follows. Site-specific tyrosine recombinase, which acts by catalyzing the cutting and rejoining of the recombining DNA molecules. Essential to convert dimers of the bacterial chromosome into monomers to permit their segregation at cell division. This chain is Tyrosine recombinase XerS, found in Streptococcus pneumoniae serotype 2 (strain D39 / NCTC 7466).